The following is a 185-amino-acid chain: Ribosome-recycling factor (185 aa).

The segment at Asn-137–Glu-158 is disordered. A compositionally biased stretch (basic and acidic residues) spans Lys-140–Glu-158.

Belongs to the RRF family.

The protein localises to the cytoplasm. Its function is as follows. Responsible for the release of ribosomes from messenger RNA at the termination of protein biosynthesis. May increase the efficiency of translation by recycling ribosomes from one round of translation to another. This Helicobacter pylori (strain P12) protein is Ribosome-recycling factor.